We begin with the raw amino-acid sequence, 939 residues long: MALAIQLRQPSRAQPLPGLSHTLAGTDSCDVCNSTNLPEVEIISLLEEQLPHYKLRADTIYGYDHDDWLHTPLISPDANIDLTTEQIEETLKYFLLCAERVGQMTKTYNDIDAVTRLLEEKERDLELAARIGQSLLKKNKTLTERNELLEEQVEHIREEVSQLRHELSMKDELLQFYTSAAEESEPESVCSTPLKRNESSSSVQNYFHLDSLQKKLKDLEEENVVLRSEACQLKTETITYEEKEQQLVNDCVKELRDANVQIASISEELAKKTEDAARQQEEITHLLSQIVDLQKKAKSCAVENEELVQHLGAAKDAQRQLTAELRELEDKYAECMEMLHEAQEELKNLRNKTMPTSRRYHSLGLFPMDSLAAEIEGTMRKELQLEELESPDITHQKRVFETVRNVNQVVKQRSLTPSPMNIPGSNQSSAMNSLLSSCVSTPRSSFYGSDVSNVVLDNKTNSILLETEAADLGNEDHNKKPGTPGTPGSHDLETALRRLSLRRENYLSERRFFEEEQERKLRELAEKGELHSGSLTPTESIMSLGTHSRFSEFTGFSGMSFSSRSYLPEKLQIVKPLEGSATLHHWQQLAQPHLGGILDPRPGVVTKGFRTLDVDLDEVYCLNDFEEDDTGDHISLAGLATSTPIQHPETSAHHPGKCMSQTNSTFTFTTCRILHPSDELTRVTPSLNSAPAPACSSTSHLKSTPVATPCTPRRLSLAESFTNVRESTTTMSTSLGLVWLLKERGISAAVYDPQSWDRAGRGSLLHSYTPRMAVIPSTPPNSPMQTPSASPPSFEFKCTSPPYNNFLASKPASSILREVREKRPVRSSESQTDVSVSNLNLVDKVRRFGVARVVNSGRARIPTLTEEQGPLLCGPTGPAQALVPGGLVPEGLPLGCPSGIRRNRSFPTMVGSSVQMRAPVILTSGILMGAKLPKQTSLR.

The HAP1 N-terminal domain occupies 46-353 (LEEQLPHYKL…EELKNLRNKT (308 aa)). The stretch at 106 to 354 (KTYNDIDAVT…ELKNLRNKTM (249 aa)) forms a coiled coil. Residues 359–509 (RYHSLGLFPM…SLRRENYLSE (151 aa)) form an interaction with HGS region. Residue Ser444 is glycosylated (O-linked (GlcNAc) serine). A disordered region spans residues 472–492 (LGNEDHNKKPGTPGTPGSHDL). The stretch at 490-524 (HDLETALRRLSLRRENYLSERRFFEEEQERKLREL) forms a coiled coil. Ser534 carries the phosphoserine modification. The interaction with OGT stretch occupies residues 655–669 (PGKCMSQTNSTFTFT). O-linked (GlcNAc) serine glycans are attached at residues Ser677 and Ser716. Phosphoserine occurs at positions 716 and 905.

Belongs to the milton family. In terms of assembly, interacts with RHOT1 and RHOT2. Found in a complex with KIF5B, OGT, RHOT1 and RHOT2. Interacts with HGS. Interacts with GABRA1. Interacts with KIF5C. Interacts with OGT; stable interaction is not required for glycosylation of this protein by OGT. Isoform 1 interacts with OGT. In terms of processing, O-glycosylated. Glycosylated by OGT; glycosylation in response to increased extracellular glucose levels is required for and leads to regulation of mitochondrial motility by OGT. As to expression, widely expressed with the greatest expression in brain, liver and kidney. Detected throughout the CNS, including the cortex, hippocamps, thalamus and various subcortical nuclei of the forebrain and midbrain, the granule of Purkinje layers of the cerebellum and the gray matter of the spinal cord. High level detected in lower moter neurons (at protein level).

It is found in the cytoplasm. It localises to the nucleus. Its subcellular location is the mitochondrion. The protein resides in the early endosome. The protein localises to the endosome. It is found in the mitochondrion membrane. It localises to the cell cortex. Involved in the regulation of endosome-to-lysosome trafficking, including endocytic trafficking of EGF-EGFR complexes and GABA-A receptors. Involved in mitochondrial motility. When O-glycosylated, abolishes mitochondrial motility. Crucial for recruiting OGT to the mitochondrial surface of neuronal processes. TRAK1 and RHOT form an essential protein complex that links KIF5 to mitochondria for light chain-independent, anterograde transport of mitochondria. The polypeptide is Trafficking kinesin-binding protein 1 (Trak1) (Mus musculus (Mouse)).